We begin with the raw amino-acid sequence, 108 residues long: Tetrahydromethanopterin S-methyltransferase subunit B (108 aa).

Residues 79–99 (GMFFGFWVTMAILVLVTILAV) traverse the membrane as a helical segment.

Belongs to the MtrB family. The complex is composed of 8 subunits; MtrA, MtrB, MtrC, MtrD, MtrE, MtrF, MtrG and MtrH.

It is found in the cell membrane. It catalyses the reaction 5-methyl-5,6,7,8-tetrahydromethanopterin + coenzyme M + 2 Na(+)(in) = 5,6,7,8-tetrahydromethanopterin + methyl-coenzyme M + 2 Na(+)(out). It participates in one-carbon metabolism; methanogenesis from CO(2); methyl-coenzyme M from 5,10-methylene-5,6,7,8-tetrahydromethanopterin: step 2/2. Functionally, part of a complex that catalyzes the formation of methyl-coenzyme M and tetrahydromethanopterin from coenzyme M and methyl-tetrahydromethanopterin. This is an energy-conserving, sodium-ion translocating step. This chain is Tetrahydromethanopterin S-methyltransferase subunit B, found in Methanococcus maripaludis (strain C7 / ATCC BAA-1331).